The following is a 360-amino-acid chain: Serine/threonine-protein kinase SAPK4 (360 aa).

The region spanning 4–260 is the Protein kinase domain; the sequence is YEAVRDIGSG…MKEIKSHPWF (257 aa). ATP is bound by residues 10–18 and lysine 33; that span reads IGSGNFGVA. The Proton acceptor role is filled by aspartate 123. Residues 303–360 are disordered; sequence TMPKSSRTGYWSDAGSDEEEKEEEERPEENEEEEEDEYDKRVKEVHASGELRMSSLRI. Residues 317 to 339 are compositionally biased toward acidic residues; it reads GSDEEEKEEEERPEENEEEEEDE. The span at 340-351 shows a compositional bias: basic and acidic residues; sequence YDKRVKEVHASG.

Belongs to the protein kinase superfamily. Ser/Thr protein kinase family. Post-translationally, may be phosphorylated. Expressed in leaf blades, leaf sheaths and roots. Expressed in shoots and roots of young seedlings.

It carries out the reaction L-seryl-[protein] + ATP = O-phospho-L-seryl-[protein] + ADP + H(+). It catalyses the reaction L-threonyl-[protein] + ATP = O-phospho-L-threonyl-[protein] + ADP + H(+). Activated by hyperosmotic stress. In terms of biological role, may play a role in signal transduction of hyperosmotic response. The protein is Serine/threonine-protein kinase SAPK4 (SAPK4) of Oryza sativa subsp. japonica (Rice).